The chain runs to 250 residues: Triosephosphate isomerase (250 aa).

Residue 9–11 (NWK) participates in substrate binding. The active-site Electrophile is His95. The Proton acceptor role is filled by Glu167. Residues Gly173, Ser212, and 233 to 234 (GG) contribute to the substrate site.

It belongs to the triosephosphate isomerase family. As to quaternary structure, homodimer.

The protein resides in the cytoplasm. The enzyme catalyses D-glyceraldehyde 3-phosphate = dihydroxyacetone phosphate. It functions in the pathway carbohydrate biosynthesis; gluconeogenesis. The protein operates within carbohydrate degradation; glycolysis; D-glyceraldehyde 3-phosphate from glycerone phosphate: step 1/1. Involved in the gluconeogenesis. Catalyzes stereospecifically the conversion of dihydroxyacetone phosphate (DHAP) to D-glyceraldehyde-3-phosphate (G3P). The chain is Triosephosphate isomerase from Psychromonas ingrahamii (strain DSM 17664 / CCUG 51855 / 37).